The primary structure comprises 151 residues: Large ribosomal subunit protein bL28c (151 aa).

The N-terminal 74 residues, 1–74, are a transit peptide targeting the chloroplast; that stretch reads MATMVAGISL…PFKPSLQPVA (74 aa).

The protein belongs to the bacterial ribosomal protein bL28 family. Part of the 50S ribosomal subunit.

The protein resides in the plastid. It localises to the chloroplast. This chain is Large ribosomal subunit protein bL28c (RPL28), found in Nicotiana tabacum (Common tobacco).